We begin with the raw amino-acid sequence, 443 residues long: Packaging protein 1 (443 aa).

Residues 1–75 (MSGAADGTVP…PEAAQPPPSR (75 aa)) form a disordered region. Over residues 13–56 (EDTHQEDSGERECEQRPVHSGREATGESDPALERPDHGERHGPE) the composition is skewed to basic and acidic residues. Residue 169–176 (GPTGSGKS) coordinates ATP. The interval 433–443 (VSYANKRKWYD) is DNA-binding.

The protein belongs to the adenoviridae packaging protein 1 family. Homodimer. Part of a genome packaging complex composed of packaging proteins 1, 2 and 3; this complex specifically binds to the packaging sequence on the left end of viral genomic DNA and performs packaging of the viral genome. Interacts with protein 33K.

The protein localises to the virion. It is found in the host nucleus. Its subcellular location is the host nucleoplasm. The protein resides in the host nucleolus. Its function is as follows. Component of the packaging machinery which encapsidates the viral DNA into preformed capsids and transcriptional activator of the viral major late promoter (MLP). Binds, along with packaging proteins 2 and 3, to the specific packaging sequence on the left end of viral genomic DNA and displays ATPase activity thereby providing the power stroke of the packaging machinery. The activity of packaging protein IVa2 is stimulated by protein 33K which acts as a terminase. May be the protein that pumps DNA into the capsid powered by ATP hydrolysis. Specifically binds to the 5'-CG-3' nucleotides of the repeats making up the packaging sequence. Component of the DEF-A and DEF-B transcription factors that bind downstream elements of the major late promoter (MLP), and stimulate transcription from the MLP after initiation of viral DNA replication. DEF-A is a heterodimer packaging proteins 1 and 2 and DEF-B is a homodimer of packaging protein 1. The sequence is that of Packaging protein 1 from Pantherophis guttatus (Corn snake).